The sequence spans 259 residues: Phosphatidylglycerol--prolipoprotein diacylglyceryl transferase (259 aa).

4 consecutive transmembrane segments (helical) span residues Ile9–Ile29, Phe55–Tyr75, Glu92–Cys112, and Val117–Gly137. Arg138 contacts a 1,2-diacyl-sn-glycero-3-phospho-(1'-sn-glycerol). The next 3 membrane-spanning stretches (helical) occupy residues Gln172 to Phe192, Gly201 to Phe221, and Ile228 to Leu248.

Belongs to the Lgt family.

It is found in the cell inner membrane. The enzyme catalyses L-cysteinyl-[prolipoprotein] + a 1,2-diacyl-sn-glycero-3-phospho-(1'-sn-glycerol) = an S-1,2-diacyl-sn-glyceryl-L-cysteinyl-[prolipoprotein] + sn-glycerol 1-phosphate + H(+). Its pathway is protein modification; lipoprotein biosynthesis (diacylglyceryl transfer). Functionally, catalyzes the transfer of the diacylglyceryl group from phosphatidylglycerol to the sulfhydryl group of the N-terminal cysteine of a prolipoprotein, the first step in the formation of mature lipoproteins. The protein is Phosphatidylglycerol--prolipoprotein diacylglyceryl transferase of Rickettsia akari (strain Hartford).